The sequence spans 435 residues: S-locus-specific glycoprotein BS29-2 (435 aa).

Residues 1–30 form the signal peptide; sequence MKGVGKPYENSHTSFLLVFFVLTLFSPAFS. In terms of domain architecture, Bulb-type lectin spans 33–155; it reads TLSSIESLKI…NKNDRSGFLW (123 aa). N-linked (GlcNAc...) asparagine glycans are attached at residues Asn-113, Asn-120, Asn-244, Asn-260, and Asn-389. The PAN domain occupies 350 to 430; the sequence is CSGDGFTRMK…NGQDLYVRLA (81 aa). 2 disulfides stabilise this stretch: Cys-380/Cys-405 and Cys-388/Cys-390.

Stigma.

Its function is as follows. Involved in sporophytic self-incompatibility system (the inability of flowering plants to achieve self-fertilization). In Brassica oleracea var. alboglabra (Chinese kale), this protein is S-locus-specific glycoprotein BS29-2 (SLSG).